The chain runs to 247 residues: Probable transcriptional regulatory protein TDE_1487 (247 aa).

It belongs to the TACO1 family.

Its subcellular location is the cytoplasm. This chain is Probable transcriptional regulatory protein TDE_1487, found in Treponema denticola (strain ATCC 35405 / DSM 14222 / CIP 103919 / JCM 8153 / KCTC 15104).